Here is a 462-residue protein sequence, read N- to C-terminus: Argininosuccinate lyase (462 aa).

Belongs to the lyase 1 family. Argininosuccinate lyase subfamily.

Its subcellular location is the cytoplasm. The enzyme catalyses 2-(N(omega)-L-arginino)succinate = fumarate + L-arginine. Its pathway is amino-acid biosynthesis; L-arginine biosynthesis; L-arginine from L-ornithine and carbamoyl phosphate: step 3/3. This chain is Argininosuccinate lyase, found in Streptococcus agalactiae serotype III (strain NEM316).